The following is a 145-amino-acid chain: Ribosome maturation factor RimP (145 aa).

This sequence belongs to the RimP family.

It is found in the cytoplasm. Functionally, required for maturation of 30S ribosomal subunits. The chain is Ribosome maturation factor RimP from Borreliella burgdorferi (strain ZS7) (Borrelia burgdorferi).